Here is a 123-residue protein sequence, read N- to C-terminus: Small ribosomal subunit protein uS12 (123 aa).

The interval 1–29 is disordered; the sequence is MPTINQLIRKKRQSSASRKKSPALQKCPQ. Residues 8 to 21 show a composition bias toward basic residues; the sequence is IRKKRQSSASRKKS. Position 89 is a 3-methylthioaspartic acid (Asp89).

Belongs to the universal ribosomal protein uS12 family. Part of the 30S ribosomal subunit. Contacts proteins S8 and S17. May interact with IF1 in the 30S initiation complex.

With S4 and S5 plays an important role in translational accuracy. Functionally, interacts with and stabilizes bases of the 16S rRNA that are involved in tRNA selection in the A site and with the mRNA backbone. Located at the interface of the 30S and 50S subunits, it traverses the body of the 30S subunit contacting proteins on the other side and probably holding the rRNA structure together. The combined cluster of proteins S8, S12 and S17 appears to hold together the shoulder and platform of the 30S subunit. The protein is Small ribosomal subunit protein uS12 of Chlamydia abortus (strain DSM 27085 / S26/3) (Chlamydophila abortus).